Consider the following 136-residue polypeptide: Nucleoside diphosphate kinase (136 aa).

Residues lysine 10, phenylalanine 58, arginine 86, threonine 92, arginine 104, and asparagine 114 each contribute to the ATP site. Histidine 117 (pros-phosphohistidine intermediate) is an active-site residue.

This sequence belongs to the NDK family. As to quaternary structure, homotetramer. It depends on Mg(2+) as a cofactor.

It is found in the cytoplasm. It catalyses the reaction a 2'-deoxyribonucleoside 5'-diphosphate + ATP = a 2'-deoxyribonucleoside 5'-triphosphate + ADP. The catalysed reaction is a ribonucleoside 5'-diphosphate + ATP = a ribonucleoside 5'-triphosphate + ADP. Its function is as follows. Major role in the synthesis of nucleoside triphosphates other than ATP. The ATP gamma phosphate is transferred to the NDP beta phosphate via a ping-pong mechanism, using a phosphorylated active-site intermediate. This is Nucleoside diphosphate kinase from Corynebacterium diphtheriae (strain ATCC 700971 / NCTC 13129 / Biotype gravis).